The sequence spans 553 residues: MKTDIEIAQECKLERIEKIAEKLNLTDDDYEVYGKYKAKIELSLLNKLKDKKDGKLVLVTAITPTPAGEGKSTVTIGLTQGLNKIGKNAVAALREPSLGPVFGIKGGACGGGYSQIVPMEDINLHFNGDFHAISSAHNLISACIDNHIKQGNELKIDINKIVFKRVLDMNDRALRDIVIGLGGSENGVVRQSSFQITVSSEIMAILCLSNSLMDLKEKIGNVIFAYDINDNPLRVKDLKIEGAACTLLKDAIKPNLVQTLENTPVIVHGGPFANIAHGCNSILATKMALKLSDYTITEAGFAADLGAEKFLDIKCRLAGLKPNCIVLVATIRALKHHGGASDINKEDIEALTKGFENLDKHIENMQKYNVPVVVAINKFVSDTDKEIECITKHCESKGIDISLCEVWAKGGEGAIELSHKVLKAASEESNYKPLYELEKSIKEKIETICKEIYSAGEVKFSNKALKMMKKIENMGFGNLPICISKTQKSISDNPALLNAPKGYTLNIDEIKLASGAGFIIAMAGGIIDMPGLPKIPVACNIDIDENGKIKGLF.

65–72 (TPAGEGKS) contacts ATP.

It belongs to the formate--tetrahydrofolate ligase family.

The enzyme catalyses (6S)-5,6,7,8-tetrahydrofolate + formate + ATP = (6R)-10-formyltetrahydrofolate + ADP + phosphate. Its pathway is one-carbon metabolism; tetrahydrofolate interconversion. The protein is Formate--tetrahydrofolate ligase of Brachyspira hyodysenteriae (strain ATCC 49526 / WA1).